The following is an 800-amino-acid chain: Phenylalanine--tRNA ligase beta subunit (800 aa).

Positions G38–G147 constitute a tRNA-binding domain. Residues V401–E477 form the B5 domain. Mg(2+) contacts are provided by D455, D461, E464, and E465. Residues P708–R799 enclose the FDX-ACB domain.

The protein belongs to the phenylalanyl-tRNA synthetase beta subunit family. Type 1 subfamily. Tetramer of two alpha and two beta subunits. Mg(2+) serves as cofactor.

It localises to the cytoplasm. It carries out the reaction tRNA(Phe) + L-phenylalanine + ATP = L-phenylalanyl-tRNA(Phe) + AMP + diphosphate + H(+). This chain is Phenylalanine--tRNA ligase beta subunit, found in Anaeromyxobacter dehalogenans (strain 2CP-C).